The following is a 793-amino-acid chain: uncharacterized protein (793 aa).

An N-terminal signal peptide occupies residues 1 to 21 (MLKKTLLAYTIGFAFSPPANA). Cysteines 769 and 792 form a disulfide.

This sequence belongs to the fimbrial export usher family.

It is found in the cell outer membrane. Functionally, involved in the export and assembly of a fimbrial subunit across the outer membrane. This is an uncharacterized protein from Escherichia coli (strain K12).